Reading from the N-terminus, the 180-residue chain is Translation initiation factor IF-3 (180 aa).

It belongs to the IF-3 family. In terms of assembly, monomer.

It localises to the cytoplasm. In terms of biological role, IF-3 binds to the 30S ribosomal subunit and shifts the equilibrium between 70S ribosomes and their 50S and 30S subunits in favor of the free subunits, thus enhancing the availability of 30S subunits on which protein synthesis initiation begins. In Salmonella typhi, this protein is Translation initiation factor IF-3.